Here is a 272-residue protein sequence, read N- to C-terminus: MSSATVLDSIIEGVRADVAAREAVVSLTEIKERAQRAKPPLDVMAALREPGIGVIAEVKRASPSRGALAQIGDPADLARAYQDGGARVISVLTEQRRFNGSLDDLDAVRAAVSIPVLRKDFIVRPYQIHEARAHGADMLLLIVAALEQPVLESLLERTESLGMTALVEVHTEAEADRALQAGARVIGVNARNLKTLEVDRDCFARIAPGLPSNVIRIAESGVRGPADLLAYAGAGADAVLVGEGLVTSRDPRSAVADLVTAGTHPSCPKPSR.

This sequence belongs to the TrpC family.

It carries out the reaction 1-(2-carboxyphenylamino)-1-deoxy-D-ribulose 5-phosphate + H(+) = (1S,2R)-1-C-(indol-3-yl)glycerol 3-phosphate + CO2 + H2O. The protein operates within amino-acid biosynthesis; L-tryptophan biosynthesis; L-tryptophan from chorismate: step 4/5. The polypeptide is Indole-3-glycerol phosphate synthase (Mycobacterium sp. (strain JLS)).